Reading from the N-terminus, the 92-residue chain is Small ribosomal subunit protein uS19 (92 aa).

This sequence belongs to the universal ribosomal protein uS19 family.

Its function is as follows. Protein S19 forms a complex with S13 that binds strongly to the 16S ribosomal RNA. This chain is Small ribosomal subunit protein uS19, found in Lysinibacillus sphaericus (strain C3-41).